Reading from the N-terminus, the 95-residue chain is Cell division topological specificity factor (95 aa).

This sequence belongs to the MinE family.

Its function is as follows. Prevents the cell division inhibition by proteins MinC and MinD at internal division sites while permitting inhibition at polar sites. This ensures cell division at the proper site by restricting the formation of a division septum at the midpoint of the long axis of the cell. The chain is Cell division topological specificity factor from Methylorubrum extorquens (strain PA1) (Methylobacterium extorquens).